The sequence spans 99 residues: Mitochondrial import receptor subunit TOM9-2 (99 aa).

Over 2–51 (AAKRIGAGKSGGGDPNILARISNSEIVSQGRRAAGDAVEVSKKLLRSTGK) the chain is Cytoplasmic. A helical membrane pass occupies residues 52 to 69 (AAWIAGTTFLILVVPLII). Over 70–99 (EMDREAQINEIELQQASLLGAPPSPMQRGL) the chain is Mitochondrial intermembrane.

Belongs to the Tom22 family. Forms part of the preprotein translocase complex of the outer mitochondrial membrane (TOM complex) which consists of at least 6 different proteins (TOM5, TOM6, TOM7, TOM20, TOM22/TOM9 and TOM40). As to expression, expressed in young cotyledons, roots, flowers and leaves.

It localises to the mitochondrion outer membrane. Its function is as follows. Central component of the receptor complex responsible for the recognition and translocation of cytosolically synthesized mitochondrial preproteins. Together with TOM20 functions as the transit peptide receptor at the surface of the mitochondrion outer membrane and facilitates the movement of preproteins into the translocation pore. The polypeptide is Mitochondrial import receptor subunit TOM9-2 (TOM9-2) (Arabidopsis thaliana (Mouse-ear cress)).